Consider the following 636-residue polypeptide: tRNA 5-methylaminomethyl-2-thiouridine biosynthesis bifunctional protein MnmC (636 aa).

The segment at 1–202 is tRNA (mnm(5)s(2)U34)-methyltransferase; the sequence is MTVSKILKQV…ERAALRAQSH (202 aa). Residues 227–636 are FAD-dependent cmnm(5)s(2)U34 oxidoreductase; that stretch reads IGGGVASACL…GKALEMSGKS (410 aa).

It in the N-terminal section; belongs to the methyltransferase superfamily. tRNA (mnm(5)s(2)U34)-methyltransferase family. The protein in the C-terminal section; belongs to the DAO family. It depends on FAD as a cofactor.

Its subcellular location is the cytoplasm. The catalysed reaction is 5-aminomethyl-2-thiouridine(34) in tRNA + S-adenosyl-L-methionine = 5-methylaminomethyl-2-thiouridine(34) in tRNA + S-adenosyl-L-homocysteine + H(+). In terms of biological role, catalyzes the last two steps in the biosynthesis of 5-methylaminomethyl-2-thiouridine (mnm(5)s(2)U) at the wobble position (U34) in tRNA. Catalyzes the FAD-dependent demodification of cmnm(5)s(2)U34 to nm(5)s(2)U34, followed by the transfer of a methyl group from S-adenosyl-L-methionine to nm(5)s(2)U34, to form mnm(5)s(2)U34. The polypeptide is tRNA 5-methylaminomethyl-2-thiouridine biosynthesis bifunctional protein MnmC (Shewanella halifaxensis (strain HAW-EB4)).